We begin with the raw amino-acid sequence, 348 residues long: Dihydroorotase (348 aa).

Residues His17 and His19 each contribute to the Zn(2+) site. Residues 19–21 (HLR) and Asn45 contribute to the substrate site. Lys103, His140, and His178 together coordinate Zn(2+). N6-carboxylysine is present on Lys103. His140 contacts substrate. Position 223 (Leu223) interacts with substrate. Residue Asp251 participates in Zn(2+) binding. Residue Asp251 is part of the active site. Residues His255 and Ala267 each coordinate substrate.

The protein belongs to the metallo-dependent hydrolases superfamily. DHOase family. Class II DHOase subfamily. As to quaternary structure, homodimer. The cofactor is Zn(2+).

It catalyses the reaction (S)-dihydroorotate + H2O = N-carbamoyl-L-aspartate + H(+). Its pathway is pyrimidine metabolism; UMP biosynthesis via de novo pathway; (S)-dihydroorotate from bicarbonate: step 3/3. Its function is as follows. Catalyzes the reversible cyclization of carbamoyl aspartate to dihydroorotate. In Serratia proteamaculans (strain 568), this protein is Dihydroorotase.